Here is a 229-residue protein sequence, read N- to C-terminus: MANELTWHDVLAEEKQQPYFLNTLQTVASERQSGVTIYPPQKDVFNAFRFTELGDVKVVILGQDPYHGPGQAHGLAFSVRPGIATPPSLLNMYKELENTIPGFTRPNHGYLESWARQGVLLLNTVLTVRAGQAHSHASLGWETFTDKVISLINQHREGVVFLLWGSHAQKKGAIIDKQRHHVLKAPHPSPLSAHRGFFGCNHFVLANQWLEQHGETPIDWMPVLPAESE.

The Proton acceptor role is filled by aspartate 64.

The protein belongs to the uracil-DNA glycosylase (UDG) superfamily. UNG family. In terms of assembly, monomer.

The protein localises to the cytoplasm. It catalyses the reaction Hydrolyzes single-stranded DNA or mismatched double-stranded DNA and polynucleotides, releasing free uracil.. Excises uracil residues from the DNA which can arise as a result of misincorporation of dUMP residues by DNA polymerase or due to deamination of cytosine. This Escherichia coli O157:H7 protein is Uracil-DNA glycosylase.